Reading from the N-terminus, the 328-residue chain is Tetraacyldisaccharide 4'-kinase (328 aa).

55 to 62 (TAGGNGKT) provides a ligand contact to ATP.

The protein belongs to the LpxK family.

The catalysed reaction is a lipid A disaccharide + ATP = a lipid IVA + ADP + H(+). The protein operates within glycolipid biosynthesis; lipid IV(A) biosynthesis; lipid IV(A) from (3R)-3-hydroxytetradecanoyl-[acyl-carrier-protein] and UDP-N-acetyl-alpha-D-glucosamine: step 6/6. Transfers the gamma-phosphate of ATP to the 4'-position of a tetraacyldisaccharide 1-phosphate intermediate (termed DS-1-P) to form tetraacyldisaccharide 1,4'-bis-phosphate (lipid IVA). The chain is Tetraacyldisaccharide 4'-kinase from Shigella flexneri serotype 5b (strain 8401).